The following is a 69-amino-acid chain: Small, acid-soluble spore protein C1 (69 aa).

The protein belongs to the alpha/beta-type SASP family.

Functionally, SASP are bound to spore DNA. They are double-stranded DNA-binding proteins that cause DNA to change to an a-like conformation. They protect the DNA backbone from chemical and enzymatic cleavage and are thus involved in dormant spore's high resistance to UV light. The sequence is that of Small, acid-soluble spore protein C1 (SASP-C1) from Priestia megaterium (Bacillus megaterium).